The chain runs to 598 residues: Elongation factor 4 (598 aa).

Residues 2-184 (KNIRNFSIIA…EIVAKIPAPE (183 aa)) enclose the tr-type G domain. GTP contacts are provided by residues 14-19 (DHGKST) and 131-134 (NKID).

This sequence belongs to the TRAFAC class translation factor GTPase superfamily. Classic translation factor GTPase family. LepA subfamily.

The protein localises to the cell inner membrane. The catalysed reaction is GTP + H2O = GDP + phosphate + H(+). In terms of biological role, required for accurate and efficient protein synthesis under certain stress conditions. May act as a fidelity factor of the translation reaction, by catalyzing a one-codon backward translocation of tRNAs on improperly translocated ribosomes. Back-translocation proceeds from a post-translocation (POST) complex to a pre-translocation (PRE) complex, thus giving elongation factor G a second chance to translocate the tRNAs correctly. Binds to ribosomes in a GTP-dependent manner. The sequence is that of Elongation factor 4 from Haemophilus influenzae (strain 86-028NP).